Consider the following 625-residue polypeptide: Chaperone protein HtpG (625 aa).

The interval 1–337 (MNIQKKEVYS…SNNLPLNVSR (337 aa)) is a; substrate-binding. Residues 338 to 552 (EILQDNSITQ…SNEMSTQMAK (215 aa)) form a b region. The interval 553 to 625 (LFSAAGQSVP…ARTNKLILEQ (73 aa)) is c.

The protein belongs to the heat shock protein 90 family. In terms of assembly, homodimer.

Its subcellular location is the cytoplasm. Functionally, molecular chaperone. Has ATPase activity. This is Chaperone protein HtpG from Buchnera aphidicola subsp. Schizaphis graminum (strain Sg).